The sequence spans 805 residues: Cell division cycle protein 48 homolog (805 aa).

ATP is bound by residues Gly249 to Thr256 and Gly522 to Thr529. The tract at residues Gly783–Ser805 is disordered.

This sequence belongs to the AAA ATPase family.

Probably functions in cell division and growth processes. The chain is Cell division cycle protein 48 homolog (CAFP) from Capsicum annuum (Capsicum pepper).